The sequence spans 524 residues: Zinc finger protein 346 (524 aa).

7 Matrin-type zinc fingers span residues 34–64 (TQCK…KVRR), 92–126 (DRSK…LRLR), 162–192 (KFCK…QETK), 226–260 (GKGF…LMSM), 286–316 (FSCD…HLKS), 343–373 (FSCD…HLMS), and 400–430 (FSCD…QLMS). Zn(2+) contacts are provided by Cys-36, Cys-39, His-52, His-58, Cys-97, Cys-100, His-113, and His-119. Disordered regions lie at residues 453-486 (SAGG…GSLP) and 494-513 (PLYP…TMSP). Residues 476 to 486 (PKGPSSFGSLP) are compositionally biased toward low complexity.

It is found in the nucleus. The protein localises to the cytoplasm. Functionally, binds preferentially to dsRNA, but also to RNA-DNA hybrids. The polypeptide is Zinc finger protein 346 (Xenopus laevis (African clawed frog)).